The following is a 293-amino-acid chain: Nucleotide-binding protein HRM2_27900 (293 aa).

11 to 18 contributes to the ATP binding site; the sequence is GLSGSGKS. Residue 62–65 participates in GTP binding; the sequence is DIRA.

The protein belongs to the RapZ-like family.

Functionally, displays ATPase and GTPase activities. In Desulforapulum autotrophicum (strain ATCC 43914 / DSM 3382 / VKM B-1955 / HRM2) (Desulfobacterium autotrophicum), this protein is Nucleotide-binding protein HRM2_27900.